Consider the following 295-residue polypeptide: Pyridoxal 5'-phosphate synthase subunit PdxS (295 aa).

Aspartate 25 serves as a coordination point for D-ribose 5-phosphate. Lysine 82 acts as the Schiff-base intermediate with D-ribose 5-phosphate in catalysis. A D-ribose 5-phosphate-binding site is contributed by glycine 154. Residue arginine 166 coordinates D-glyceraldehyde 3-phosphate. D-ribose 5-phosphate is bound by residues glycine 215 and 236-237 (GS).

The protein belongs to the PdxS/SNZ family. In terms of assembly, in the presence of PdxT, forms a dodecamer of heterodimers.

It catalyses the reaction aldehydo-D-ribose 5-phosphate + D-glyceraldehyde 3-phosphate + L-glutamine = pyridoxal 5'-phosphate + L-glutamate + phosphate + 3 H2O + H(+). The protein operates within cofactor biosynthesis; pyridoxal 5'-phosphate biosynthesis. Catalyzes the formation of pyridoxal 5'-phosphate from ribose 5-phosphate (RBP), glyceraldehyde 3-phosphate (G3P) and ammonia. The ammonia is provided by the PdxT subunit. Can also use ribulose 5-phosphate and dihydroxyacetone phosphate as substrates, resulting from enzyme-catalyzed isomerization of RBP and G3P, respectively. In Staphylococcus epidermidis (strain ATCC 35984 / DSM 28319 / BCRC 17069 / CCUG 31568 / BM 3577 / RP62A), this protein is Pyridoxal 5'-phosphate synthase subunit PdxS.